A 299-amino-acid polypeptide reads, in one-letter code: UDP-N-acetylenolpyruvoylglucosamine reductase (299 aa).

The FAD-binding PCMH-type domain maps to K27–G192. Residue R172 is part of the active site. The disordered stretch occupies residues A206–N225. The span at R208–K224 shows a compositional bias: polar residues. The active-site Proton donor is the S221. E291 is a catalytic residue.

It belongs to the MurB family. FAD serves as cofactor.

Its subcellular location is the cytoplasm. The enzyme catalyses UDP-N-acetyl-alpha-D-muramate + NADP(+) = UDP-N-acetyl-3-O-(1-carboxyvinyl)-alpha-D-glucosamine + NADPH + H(+). The protein operates within cell wall biogenesis; peptidoglycan biosynthesis. Functionally, cell wall formation. The protein is UDP-N-acetylenolpyruvoylglucosamine reductase of Sphingopyxis alaskensis (strain DSM 13593 / LMG 18877 / RB2256) (Sphingomonas alaskensis).